A 127-amino-acid chain; its full sequence is Probable 4-amino-4-deoxy-L-arabinose-phosphoundecaprenol flippase subunit ArnF (127 aa).

At 1-2 (MG) the chain is on the cytoplasmic side. A helical transmembrane segment spans residues 3–23 (LLFALGSVVLVSAAQLLLKWA). Residues 24–47 (MIQLPDISQLPQFLSSLSQFPLPT) lie on the Periplasmic side of the membrane. The helical transmembrane segment at 48 to 68 (AALFLGLLAYALSMLCWLLAL) threads the bilayer. The Cytoplasmic segment spans residues 69–76 (KRLPLSRA). A helical transmembrane segment spans residues 77–97 (YPLLSLSYLLVWLAALWLPGL). Over 98-102 (NEVFR) the chain is Periplasmic. Residues 103-123 (WGKLAGAGLIVSGLLLICWPA) form a helical membrane-spanning segment. At 124-127 (AKTR) the chain is on the cytoplasmic side.

It belongs to the ArnF family. In terms of assembly, heterodimer of ArnE and ArnF.

The protein resides in the cell inner membrane. It participates in bacterial outer membrane biogenesis; lipopolysaccharide biosynthesis. Its function is as follows. Translocates 4-amino-4-deoxy-L-arabinose-phosphoundecaprenol (alpha-L-Ara4N-phosphoundecaprenol) from the cytoplasmic to the periplasmic side of the inner membrane. The polypeptide is Probable 4-amino-4-deoxy-L-arabinose-phosphoundecaprenol flippase subunit ArnF (Erwinia tasmaniensis (strain DSM 17950 / CFBP 7177 / CIP 109463 / NCPPB 4357 / Et1/99)).